Consider the following 290-residue polypeptide: Probable endonuclease 4 (290 aa).

Residues His-69, His-109, Glu-145, Asp-179, His-182, His-216, Asp-229, His-231, and Glu-261 each coordinate Zn(2+).

The protein belongs to the AP endonuclease 2 family. Zn(2+) is required as a cofactor.

The catalysed reaction is Endonucleolytic cleavage to 5'-phosphooligonucleotide end-products.. Its function is as follows. Endonuclease IV plays a role in DNA repair. It cleaves phosphodiester bonds at apurinic or apyrimidinic (AP) sites, generating a 3'-hydroxyl group and a 5'-terminal sugar phosphate. In Chlorobium limicola (strain DSM 245 / NBRC 103803 / 6330), this protein is Probable endonuclease 4.